We begin with the raw amino-acid sequence, 301 residues long: NAD kinase (301 aa).

Aspartate 81 acts as the Proton acceptor in catalysis. Residues 81–82, 155–156, histidine 166, arginine 183, aspartate 185, 196–201, and glutamine 256 each bind NAD(+); these read DG, NE, and TAYSLS.

Belongs to the NAD kinase family. A divalent metal cation serves as cofactor.

It localises to the cytoplasm. It carries out the reaction NAD(+) + ATP = ADP + NADP(+) + H(+). Involved in the regulation of the intracellular balance of NAD and NADP, and is a key enzyme in the biosynthesis of NADP. Catalyzes specifically the phosphorylation on 2'-hydroxyl of the adenosine moiety of NAD to yield NADP. This chain is NAD kinase, found in Mannheimia succiniciproducens (strain KCTC 0769BP / MBEL55E).